Consider the following 346-residue polypeptide: DNA ligase (346 aa).

ATP-binding positions include 32-35 (DCKY), Arg39, 55-57 (RVS), Glu93, Glu142, and Arg149. Lys34 serves as the catalytic N6-AMP-lysine intermediate. Glu223 is a binding site for a divalent metal cation. The ATP site is built by Lys238 and Lys244.

The protein belongs to the ATP-dependent DNA ligase family. The cofactor is a divalent metal cation.

It catalyses the reaction ATP + (deoxyribonucleotide)n-3'-hydroxyl + 5'-phospho-(deoxyribonucleotide)m = (deoxyribonucleotide)n+m + AMP + diphosphate.. In terms of biological role, DNA ligase, which is expressed in the early stage of lytic development, has been implicated in T7 DNA synthesis and genetic recombination. It may also play a role in T7 DNA repair. The chain is DNA ligase (1.3) from Enterobacteria phage T3 (Bacteriophage T3).